The chain runs to 414 residues: Serine hydroxymethyltransferase (414 aa).

(6S)-5,6,7,8-tetrahydrofolate is bound by residues L121 and G125–L127. Position 229 is an N6-(pyridoxal phosphate)lysine (K229).

It belongs to the SHMT family. Homodimer. Pyridoxal 5'-phosphate serves as cofactor.

Its subcellular location is the cytoplasm. The enzyme catalyses (6R)-5,10-methylene-5,6,7,8-tetrahydrofolate + glycine + H2O = (6S)-5,6,7,8-tetrahydrofolate + L-serine. Its pathway is one-carbon metabolism; tetrahydrofolate interconversion. It functions in the pathway amino-acid biosynthesis; glycine biosynthesis; glycine from L-serine: step 1/1. Catalyzes the reversible interconversion of serine and glycine with tetrahydrofolate (THF) serving as the one-carbon carrier. This reaction serves as the major source of one-carbon groups required for the biosynthesis of purines, thymidylate, methionine, and other important biomolecules. Also exhibits THF-independent aldolase activity toward beta-hydroxyamino acids, producing glycine and aldehydes, via a retro-aldol mechanism. This Polaromonas naphthalenivorans (strain CJ2) protein is Serine hydroxymethyltransferase.